Consider the following 886-residue polypeptide: DNA mismatch repair protein MutS (886 aa).

Gly627–Ser634 contacts ATP. The disordered stretch occupies residues Val834–Asp857.

It belongs to the DNA mismatch repair MutS family.

In terms of biological role, this protein is involved in the repair of mismatches in DNA. It is possible that it carries out the mismatch recognition step. This protein has a weak ATPase activity. The polypeptide is DNA mismatch repair protein MutS (Burkholderia vietnamiensis (strain G4 / LMG 22486) (Burkholderia cepacia (strain R1808))).